Here is a 930-residue protein sequence, read N- to C-terminus: SCY1-like protein 2 (930 aa).

The Protein kinase domain maps to 32 to 327; it reads FDVGRHIASG…ADQMTKIPFF (296 aa). The stretch at 443–479 is one HEAT repeat; it reads DEIKNSVLPMVYRALEAPSIQIQELCLNIIPTFANLI. 2 positions are modified to phosphoserine: Ser658 and Ser677. Residues 658 to 706 are disordered; the sequence is SGSESENREDGMQGKQKRGSLTLEEKQKLAKEQEQAQKLKSQQPLKPQV. Basic and acidic residues predominate over residues 680-694; it reads LEEKQKLAKEQEQAQ. Low complexity predominate over residues 695–705; it reads KLKSQQPLKPQ. Thr708 carries the post-translational modification Phosphothreonine. Positions 895–930 are disordered; that stretch reads GMQGNPFFNPQNFAQPPPTTMTSSSSASNDLKDLFG. A compositionally biased stretch (low complexity) spans 897–922; the sequence is QGNPFFNPQNFAQPPPTTMTSSSSAS.

This sequence belongs to the protein kinase superfamily. Interacts with clathrin and AP2B1; the interaction mediates the association with the AP-2 complex. In terms of processing, could autophosphorylate in presence of poly-L-lysine. Ubiquitously expressed.

It is found in the cytoplasmic vesicle. The protein localises to the clathrin-coated vesicle. It localises to the golgi apparatus. Its subcellular location is the trans-Golgi network membrane. The protein resides in the endosome membrane. In terms of biological role, component of the AP2-containing clathrin coat that may regulate clathrin-dependent trafficking at plasma membrane, TGN and endosomal system. A possible serine/threonine-protein kinase toward the beta2-subunit of the plasma membrane adapter complex AP2 and other proteins in presence of poly-L-lysine has not been confirmed. By regulating the expression of excitatory receptors at synapses, plays an essential role in neuronal function and signaling and in brain development. In Mus musculus (Mouse), this protein is SCY1-like protein 2.